The sequence spans 37 residues: Alpha-conotoxin-like Kn1.2 (37 aa).

A compositionally biased stretch (basic and acidic residues) spans 1–15 (ESDGAHAKARADKPA). A propeptide spanning residues 1–22 (ESDGAHAKARADKPARSATNRQ) is cleaved from the precursor. Residues 1 to 23 (ESDGAHAKARADKPARSATNRQP) form a disordered region. 2 disulfide bridges follow: Cys-25–Cys-31 and Cys-26–Cys-36. The residue at position 36 (Cys-36) is a Cysteine amide.

This sequence belongs to the conotoxin A superfamily. Expressed by the venom duct.

The protein localises to the secreted. Alpha-conotoxins act on postsynaptic membranes, they bind to the nicotinic acetylcholine receptors (nAChR) and thus inhibit them. This toxin inhibits high voltage-activated (HVA) calcium channel currents in rat DRG neurons (13% inhibition at 1 uM toxin) probably by activating GABA(B) receptors (GABBR1 and/or GABBR2). This chain is Alpha-conotoxin-like Kn1.2, found in Conus kinoshitai (Kinoshita's cone).